We begin with the raw amino-acid sequence, 145 residues long: 3-hydroxyacyl-[acyl-carrier-protein] dehydratase FabZ (145 aa).

The active site involves H48.

Belongs to the thioester dehydratase family. FabZ subfamily.

It localises to the cytoplasm. The catalysed reaction is a (3R)-hydroxyacyl-[ACP] = a (2E)-enoyl-[ACP] + H2O. Involved in unsaturated fatty acids biosynthesis. Catalyzes the dehydration of short chain beta-hydroxyacyl-ACPs and long chain saturated and unsaturated beta-hydroxyacyl-ACPs. This Cellvibrio japonicus (strain Ueda107) (Pseudomonas fluorescens subsp. cellulosa) protein is 3-hydroxyacyl-[acyl-carrier-protein] dehydratase FabZ.